Consider the following 348-residue polypeptide: L-threonine 3-dehydrogenase (348 aa).

Cys38 is a Zn(2+) binding site. Catalysis depends on charge relay system residues Thr40 and His43. Residues His63, Glu64, Cys93, Cys96, Cys99, and Cys107 each coordinate Zn(2+). NAD(+)-binding positions include Ile175, Asp195, Arg200, 263 to 265 (LGI), and 287 to 288 (IY).

It belongs to the zinc-containing alcohol dehydrogenase family. Homotetramer. Zn(2+) is required as a cofactor.

It localises to the cytoplasm. The catalysed reaction is L-threonine + NAD(+) = (2S)-2-amino-3-oxobutanoate + NADH + H(+). The protein operates within amino-acid degradation; L-threonine degradation via oxydo-reductase pathway; glycine from L-threonine: step 1/2. Functionally, catalyzes the NAD(+)-dependent oxidation of L-threonine to 2-amino-3-ketobutyrate. This Deinococcus radiodurans (strain ATCC 13939 / DSM 20539 / JCM 16871 / CCUG 27074 / LMG 4051 / NBRC 15346 / NCIMB 9279 / VKM B-1422 / R1) protein is L-threonine 3-dehydrogenase.